A 257-amino-acid chain; its full sequence is Major prion protein (257 aa).

The first 24 residues, 1 to 24, serve as a signal peptide directing secretion; sequence MVKSHIGGWILLLFVATWSDVGLC. Positions 25–234 are interaction with GRB2, ERI3 and SYN1; it reads KKRPKPGGWN…ESEAYYQRGA (210 aa). The tract at residues 28–110 is disordered; the sequence is PKPGGWNTGG…GQWGKPNKPK (83 aa). 2 stretches are compositionally biased toward gly residues: residues 33 to 48 and 55 to 101; these read WNTGGGSRYPGQGSPG and QGGG…GSHG. 5 tandem repeats follow at residues 54–62, 63–70, 71–78, 79–86, and 87–95. Residues 54-95 are 5 X 8 AA tandem repeats of P-H-G-G-G-W-G-Q; that stretch reads PQGGGGWGQPHGGGWGQPHGGGWGQPHGGGWGQPHGGGGWGQ. 12 residues coordinate Cu(2+): His64, Gly65, Gly66, His72, Gly73, Gly74, His80, Gly81, Gly82, His88, Gly90, and Gly91. Cys183 and Cys218 are joined by a disulfide. N-linked (GlcNAc...) asparagine glycans are attached at residues Asn185 and Asn201. Ala234 is lipidated: GPI-anchor amidated alanine. The propeptide at 235–257 is removed in mature form; the sequence is SAILFSPPPVILLISLLILLIVG.

This sequence belongs to the prion family. As to quaternary structure, monomer and homodimer. Has a tendency to aggregate into amyloid fibrils containing a cross-beta spine, formed by a steric zipper of superposed beta-strands. Soluble oligomers may represent an intermediate stage on the path to fibril formation. Copper binding may promote oligomerization. Interacts with GRB2, APP, ERI3/PRNPIP and SYN1. Mislocalized cytosolically exposed PrP interacts with MGRN1; this interaction alters MGRN1 subcellular location and causes lysosomal enlargement. Interacts with KIAA1191.

The protein localises to the cell membrane. It localises to the golgi apparatus. Functionally, its primary physiological function is unclear. Has cytoprotective activity against internal or environmental stresses. May play a role in neuronal development and synaptic plasticity. May be required for neuronal myelin sheath maintenance. May play a role in iron uptake and iron homeostasis. Soluble oligomers are toxic to cultured neuroblastoma cells and induce apoptosis (in vitro). Association with GPC1 (via its heparan sulfate chains) targets PRNP to lipid rafts. Also provides Cu(2+) or Zn(2+) for the ascorbate-mediated GPC1 deaminase degradation of its heparan sulfate side chains. This Vulpes lagopus (Arctic fox) protein is Major prion protein.